A 492-amino-acid polypeptide reads, in one-letter code: Replication factor C large subunit (492 aa).

Residue 46–53 (GPPGSGKT) participates in ATP binding. The segment at 445 to 492 (VIPKRPKISDNQISEILTKDNNPKDDVKKASKKPESTSKKQATLDKFF) is disordered. Over residues 461-482 (LTKDNNPKDDVKKASKKPESTS) the composition is skewed to basic and acidic residues.

It belongs to the activator 1 small subunits family. RfcL subfamily. In terms of assembly, heteromultimer composed of small subunits (RfcS) and large subunits (RfcL).

In terms of biological role, part of the RFC clamp loader complex which loads the PCNA sliding clamp onto DNA. In Methanococcus vannielii (strain ATCC 35089 / DSM 1224 / JCM 13029 / OCM 148 / SB), this protein is Replication factor C large subunit.